Here is a 992-residue protein sequence, read N- to C-terminus: Tubulin glycylase 3A (992 aa).

Disordered stretches follow at residues 1–54 and 68–113; these read MQTR…NRVV and QSDS…LGAP. Basic and acidic residues predominate over residues 7–26; sequence SEPHRSRDQVTDGDRNRDQP. Positions 39–49 are enriched in pro residues; sequence VTPPAAPPPTP. One can recognise a TTL domain in the interval 295 to 645; the sequence is FKLTACVAFL…RRTDPKAELG (351 aa). Residues 457–460, K470, and D472 each bind ATP; that span reads QKYI. 2 disordered regions span residues 746-766 and 791-828; these read SLCS…TATP and KRNT…PVES. Positions 794 to 807 are enriched in polar residues; that stretch reads TGGSLSGEQVQSTA.

It localises to the cytoplasm. It is found in the cytoskeleton. In terms of biological role, polylycylase which modifies alpha- and beta-tubulin, generating side chains of glycine on the gamma-carboxyl groups of specific glutamate residues within the C-terminal tail of alpha- and beta-tubulin. Involved both in the side-chain initiation and elongation steps of the polyglycylation reaction by adding a single glycine chain to generate monoglycine side chains and by elongating monoglycine side chains to polyglycine side chains. The protein is Tubulin glycylase 3A (TTLL3A) of Drosophila melanogaster (Fruit fly).